The sequence spans 206 residues: Small ribosomal subunit protein uS4A (206 aa).

One can recognise an S4 RNA-binding domain in the interval 98-163; that stretch reads MRLDNVVYRL…SERFKMFAEN (66 aa).

Belongs to the universal ribosomal protein uS4 family. As to quaternary structure, part of the 30S ribosomal subunit. Contacts protein S5. The interaction surface between S4 and S5 is involved in control of translational fidelity.

Its function is as follows. One of the primary rRNA binding proteins, it binds directly to 16S rRNA where it nucleates assembly of the body of the 30S subunit. In terms of biological role, with S5 and S12 plays an important role in translational accuracy. This Clostridium perfringens (strain SM101 / Type A) protein is Small ribosomal subunit protein uS4A.